Here is a 308-residue protein sequence, read N- to C-terminus: tRNA dimethylallyltransferase (308 aa).

10–17 (GPTASGKT) is a binding site for ATP. Residue 12–17 (TASGKT) coordinates substrate. Interaction with substrate tRNA stretches follow at residues 35-38 (DSSL) and 159-163 (QRIFR).

Belongs to the IPP transferase family. Monomer. The cofactor is Mg(2+).

It carries out the reaction adenosine(37) in tRNA + dimethylallyl diphosphate = N(6)-dimethylallyladenosine(37) in tRNA + diphosphate. In terms of biological role, catalyzes the transfer of a dimethylallyl group onto the adenine at position 37 in tRNAs that read codons beginning with uridine, leading to the formation of N6-(dimethylallyl)adenosine (i(6)A). The sequence is that of tRNA dimethylallyltransferase from Francisella tularensis subsp. tularensis (strain FSC 198).